A 500-amino-acid chain; its full sequence is Cysteine--tRNA ligase (500 aa).

Position 30 (Cys-30) interacts with Zn(2+). The short motif at Pro-32 to Asn-42 is the 'HIGH' region element. Residues Cys-224, His-263, and Glu-267 each contribute to the Zn(2+) site. Residues Lys-296–Ser-300 carry the 'KMSKS' region motif. Lys-299 is an ATP binding site.

It belongs to the class-I aminoacyl-tRNA synthetase family. In terms of assembly, monomer. The cofactor is Zn(2+).

The protein localises to the cytoplasm. It catalyses the reaction tRNA(Cys) + L-cysteine + ATP = L-cysteinyl-tRNA(Cys) + AMP + diphosphate. This chain is Cysteine--tRNA ligase, found in Bartonella bacilliformis (strain ATCC 35685 / KC583 / Herrer 020/F12,63).